We begin with the raw amino-acid sequence, 152 residues long: Globin CTT-E/E' (152 aa).

Residues 1–15 (MKFIILALCVAAASA) form the signal peptide. The 137-residue stretch at 16-152 (LSGDQIGLVQ…AFFGAVFAKM (137 aa)) folds into the Globin domain. Residues His73 and His102 each coordinate heme b.

It belongs to the globin family.

This Chironomus thummi thummi (Midge) protein is Globin CTT-E/E' (CTT-E).